The chain runs to 287 residues: Glycine--tRNA ligase alpha subunit (287 aa).

The protein belongs to the class-II aminoacyl-tRNA synthetase family. Tetramer of two alpha and two beta subunits.

Its subcellular location is the cytoplasm. The enzyme catalyses tRNA(Gly) + glycine + ATP = glycyl-tRNA(Gly) + AMP + diphosphate. The protein is Glycine--tRNA ligase alpha subunit of Campylobacter jejuni subsp. doylei (strain ATCC BAA-1458 / RM4099 / 269.97).